The chain runs to 123 residues: MADLQKIVDDLSSLTVLEAAELAKLLEEKWGVSAAAAVAVAGPAAAAAAPAEEKTEFTVVLASAGDKKIEVIKEVRAITGLGLKEAKDLVEGAPKPVKEGVNKDEAEKVKAQLEKAGAKVELK.

Belongs to the bacterial ribosomal protein bL12 family. In terms of assembly, homodimer. Part of the ribosomal stalk of the 50S ribosomal subunit. Forms a multimeric L10(L12)X complex, where L10 forms an elongated spine to which 2 to 4 L12 dimers bind in a sequential fashion. Binds GTP-bound translation factors.

Its function is as follows. Forms part of the ribosomal stalk which helps the ribosome interact with GTP-bound translation factors. Is thus essential for accurate translation. The polypeptide is Large ribosomal subunit protein bL12 (Rhodopseudomonas palustris (strain BisA53)).